The following is a 948-amino-acid chain: Alanine--tRNA ligase (948 aa).

Residues His-638, His-642, Cys-739, and His-743 each contribute to the Zn(2+) site.

It belongs to the class-II aminoacyl-tRNA synthetase family. It depends on Zn(2+) as a cofactor.

Its subcellular location is the cytoplasm. The catalysed reaction is tRNA(Ala) + L-alanine + ATP = L-alanyl-tRNA(Ala) + AMP + diphosphate. Functionally, catalyzes the attachment of alanine to tRNA(Ala) in a two-step reaction: alanine is first activated by ATP to form Ala-AMP and then transferred to the acceptor end of tRNA(Ala). Also edits incorrectly charged Ser-tRNA(Ala) and Gly-tRNA(Ala) via its editing domain. This is Alanine--tRNA ligase from Paracidovorax citrulli (strain AAC00-1) (Acidovorax citrulli).